The sequence spans 962 residues: UBP9-binding protein bun107 (962 aa).

6 WD repeats span residues 25-69 (DANC…GKAS), 77-116 (AHSA…ASCL), 121-162 (EHTD…EVMR), 172-211 (VVGP…RITD), 214-253 (GHTD…CLFS), and 302-339 (KQDA…NQDV). Low complexity predominate over residues 568–578 (SPLRIRSRPSP). 2 disordered regions span residues 568-615 (SPLR…QIPS) and 702-758 (RAAS…PREL). Residues 707-723 (RVFSTGTSVTSPQALSK) are compositionally biased toward polar residues. Phosphoserine is present on serine 717. The span at 724-738 (TNNTVNNAANTENNT) shows a compositional bias: low complexity.

Interacts with ubp9 and bun62.

The protein localises to the cytoplasm. The protein resides in the cell tip. In terms of biological role, required for the ubp9 recruitment to septa and cell tips but also for its enzymatic activity at these specific locations. In Schizosaccharomyces pombe (strain 972 / ATCC 24843) (Fission yeast), this protein is UBP9-binding protein bun107 (bun107).